A 570-amino-acid chain; its full sequence is Urease subunit alpha (570 aa).

His137, His139, and Lys220 together coordinate Ni(2+). N6-carboxylysine is present on Lys220. His222 provides a ligand contact to substrate. The Ni(2+) site is built by His249 and His275. His323 serves as the catalytic Proton donor. Asp363 serves as a coordination point for Ni(2+).

The protein belongs to the metallo-dependent hydrolases superfamily. Urease alpha subunit family. In terms of assembly, heterotrimer of UreA (gamma), UreB (beta) and UreC (alpha) subunits. Three heterotrimers associate to form the active enzyme. Requires Ni cation as cofactor. In terms of processing, carboxylation allows a single lysine to coordinate two nickel ions.

The protein resides in the cytoplasm. The enzyme catalyses urea + 2 H2O + H(+) = hydrogencarbonate + 2 NH4(+). Its pathway is nitrogen metabolism; urea degradation; CO(2) and NH(3) from urea (urease route): step 1/1. In Lachnoclostridium phytofermentans (strain ATCC 700394 / DSM 18823 / ISDg) (Clostridium phytofermentans), this protein is Urease subunit alpha.